A 372-amino-acid polypeptide reads, in one-letter code: Non-structural protein NS2 (372 aa).

A disordered region spans residues 259 to 326 (NQIEKQHTTH…QESEPESPSF (68 aa)). The segment covering 299 to 309 (TETTSTSSSHH) has biased composition (low complexity).

The chain is Non-structural protein NS2 (NS) from Aedes albopictus (Asian tiger mosquito).